A 398-amino-acid polypeptide reads, in one-letter code: Probable aminomethyltransferase (398 aa).

This sequence belongs to the GcvT family. The glycine cleavage system is composed of four proteins: P, T, L and H.

The catalysed reaction is N(6)-[(R)-S(8)-aminomethyldihydrolipoyl]-L-lysyl-[protein] + (6S)-5,6,7,8-tetrahydrofolate = N(6)-[(R)-dihydrolipoyl]-L-lysyl-[protein] + (6R)-5,10-methylene-5,6,7,8-tetrahydrofolate + NH4(+). Its function is as follows. The glycine cleavage system catalyzes the degradation of glycine. This Pyrococcus abyssi (strain GE5 / Orsay) protein is Probable aminomethyltransferase.